The following is a 943-amino-acid chain: Protein translocase subunit SecA (943 aa).

ATP contacts are provided by residues glutamine 90, 108–112, and aspartate 509; that span reads GEGKT. Positions 535–562 are disordered; sequence PDNEHKPPIPKQRNSKSKGGFSRKAGSN.

It belongs to the SecA family. Monomer and homodimer. Part of the essential Sec protein translocation apparatus which comprises SecA, SecYEG and auxiliary proteins SecDF. Other proteins may also be involved.

It is found in the cell inner membrane. Its subcellular location is the cellular thylakoid membrane. The protein resides in the cytoplasm. It catalyses the reaction ATP + H2O + cellular proteinSide 1 = ADP + phosphate + cellular proteinSide 2.. Part of the Sec protein translocase complex. Interacts with the SecYEG preprotein conducting channel. Has a central role in coupling the hydrolysis of ATP to the transfer of proteins into and across the cell membrane, serving as an ATP-driven molecular motor driving the stepwise translocation of polypeptide chains across the membrane. Its function is as follows. Probably participates in protein translocation into and across both the cytoplasmic and thylakoid membranes in cyanobacterial cells. This chain is Protein translocase subunit SecA, found in Prochlorococcus marinus (strain AS9601).